Consider the following 950-residue polypeptide: Leucine--tRNA ligase (950 aa).

Positions 41–52 match the 'HIGH' region motif; that stretch reads PYPSGDGLHVGH. The 'KMSKS' region motif lies at 718 to 722; it reads KMSKS. Lys721 is an ATP binding site.

This sequence belongs to the class-I aminoacyl-tRNA synthetase family.

Its subcellular location is the cytoplasm. The enzyme catalyses tRNA(Leu) + L-leucine + ATP = L-leucyl-tRNA(Leu) + AMP + diphosphate. The protein is Leucine--tRNA ligase of Rhodopirellula baltica (strain DSM 10527 / NCIMB 13988 / SH1).